The following is a 333-amino-acid chain: Glycerol-3-phosphate dehydrogenase [NAD(P)+] 2 (333 aa).

Residues Ser-12, Trp-13, Arg-32, and Lys-106 each contribute to the NADPH site. Positions 106 and 134 each coordinate sn-glycerol 3-phosphate. Residue Ala-138 participates in NADPH binding. Residues Lys-189, Asp-242, Ser-252, Arg-253, and Asn-254 each contribute to the sn-glycerol 3-phosphate site. The Proton acceptor role is filled by Lys-189. NADPH is bound at residue Arg-253. Val-277 and Glu-279 together coordinate NADPH.

It belongs to the NAD-dependent glycerol-3-phosphate dehydrogenase family.

It is found in the cytoplasm. It catalyses the reaction sn-glycerol 3-phosphate + NAD(+) = dihydroxyacetone phosphate + NADH + H(+). It carries out the reaction sn-glycerol 3-phosphate + NADP(+) = dihydroxyacetone phosphate + NADPH + H(+). Its pathway is membrane lipid metabolism; glycerophospholipid metabolism. Catalyzes the reduction of the glycolytic intermediate dihydroxyacetone phosphate (DHAP) to sn-glycerol 3-phosphate (G3P), the key precursor for phospholipid synthesis. The chain is Glycerol-3-phosphate dehydrogenase [NAD(P)+] 2 from Sphingopyxis alaskensis (strain DSM 13593 / LMG 18877 / RB2256) (Sphingomonas alaskensis).